We begin with the raw amino-acid sequence, 485 residues long: Ribosomal protein uS12 methylthiotransferase RimO (485 aa).

The region spanning Pro14–Pro124 is the MTTase N-terminal domain. Cys23, Cys59, Cys88, Cys167, Cys171, and Cys174 together coordinate [4Fe-4S] cluster. Residues Leu153–Glu389 enclose the Radical SAM core domain. In terms of domain architecture, TRAM spans Ala392–His468.

It belongs to the methylthiotransferase family. RimO subfamily. The cofactor is [4Fe-4S] cluster.

It localises to the cytoplasm. The enzyme catalyses L-aspartate(89)-[ribosomal protein uS12]-hydrogen + (sulfur carrier)-SH + AH2 + 2 S-adenosyl-L-methionine = 3-methylsulfanyl-L-aspartate(89)-[ribosomal protein uS12]-hydrogen + (sulfur carrier)-H + 5'-deoxyadenosine + L-methionine + A + S-adenosyl-L-homocysteine + 2 H(+). Catalyzes the methylthiolation of an aspartic acid residue of ribosomal protein uS12. The chain is Ribosomal protein uS12 methylthiotransferase RimO from Deinococcus geothermalis (strain DSM 11300 / CIP 105573 / AG-3a).